Reading from the N-terminus, the 311-residue chain is tRNA dimethylallyltransferase (311 aa).

Residue 9–16 (GPTAVGKT) participates in ATP binding. Substrate is bound at residue 11–16 (TAVGKT). The segment at 34–37 (DSMQ) is interaction with substrate tRNA.

It belongs to the IPP transferase family. In terms of assembly, monomer. The cofactor is Mg(2+).

The enzyme catalyses adenosine(37) in tRNA + dimethylallyl diphosphate = N(6)-dimethylallyladenosine(37) in tRNA + diphosphate. Functionally, catalyzes the transfer of a dimethylallyl group onto the adenine at position 37 in tRNAs that read codons beginning with uridine, leading to the formation of N6-(dimethylallyl)adenosine (i(6)A). This chain is tRNA dimethylallyltransferase, found in Clostridium botulinum (strain Loch Maree / Type A3).